The primary structure comprises 425 residues: Protein UL117 (425 aa).

Residues 59 to 83 (PTTTSSSLAPPRDDERRPTPPLRPP) form a disordered region.

It belongs to the herpesviridae U84 family.

Its subcellular location is the host nucleus. Functionally, plays a role in the inhibition of host DNA replication in the infected cell. Targets the mini-chromosome maintenance (MCM) complex and blocks the accumulation of MCM proteins and their loading onto host chromatin. The chain is Protein UL117 (UL117) from Homo sapiens (Human).